Here is a 955-residue protein sequence, read N- to C-terminus: Coiled-coil domain-containing protein 146 (955 aa).

Residues 1-17 show a composition bias toward acidic residues; it reads MEDSSTDTEKEEEEEKD. Residues 1-22 form a disordered region; that stretch reads MEDSSTDTEKEEEEEKDEKDQE. 5 coiled-coil regions span residues 114 to 141, 169 to 321, 400 to 461, 534 to 640, and 667 to 832; these read EAFSTEVSKMREQLLKYQNEYNAVKERE, GEME…AREN, STLS…LLRM, KAHQ…RNES, and NGEI…MKQA.

As to quaternary structure, interacts with CCDC38 and CCDC42. Interacts with intraflagellar transport proteins IFT20 and IFT88. In terms of assembly, (Microbial infection) Interacts with Chlamydia trachomatis incM/YT288. In host cells infected with C.trachomatis incM, CCDC146 is recruited to the periphery of the pathogen-containing vacuole but recruitment is not dependent on incM. Widely expressed.

The protein localises to the cytoplasm. It localises to the cytoskeleton. The protein resides in the microtubule organizing center. Its subcellular location is the centrosome. It is found in the centriole. The protein localises to the flagellum axoneme. It localises to the cilium basal body. The protein resides in the midbody. Its function is as follows. Essential for sperm flagellum biogenesis and male fertility. The protein is Coiled-coil domain-containing protein 146 (CCDC146) of Homo sapiens (Human).